The primary structure comprises 188 residues: Sulfopyruvate decarboxylase subunit beta (188 aa).

Belongs to the TPP enzyme family. Heterododecamer composed of 6 subunits alpha and 6 subunits beta. Thiamine diphosphate serves as cofactor.

It catalyses the reaction 3-sulfopyruvate + H(+) = sulfoacetaldehyde + CO2. The protein operates within cofactor biosynthesis; coenzyme M biosynthesis; sulfoacetaldehyde from phosphoenolpyruvate and sulfite: step 4/4. Its activity is regulated as follows. Inhibited by oxygen when heated in air at 80 degrees Celsius. The enzyme is reactivated by addition of dithionite. In terms of biological role, involved in the biosynthesis of the coenzyme M (2-mercaptoethanesulfonic acid). Catalyzes the decarboxylation of sulfopyruvate to sulfoacetaldehyde. The polypeptide is Sulfopyruvate decarboxylase subunit beta (Methanocaldococcus jannaschii (strain ATCC 43067 / DSM 2661 / JAL-1 / JCM 10045 / NBRC 100440) (Methanococcus jannaschii)).